The following is an 878-amino-acid chain: Alanine--tRNA ligase (878 aa).

His558, His562, Cys663, and His667 together coordinate Zn(2+).

Belongs to the class-II aminoacyl-tRNA synthetase family. Requires Zn(2+) as cofactor.

It is found in the cytoplasm. The enzyme catalyses tRNA(Ala) + L-alanine + ATP = L-alanyl-tRNA(Ala) + AMP + diphosphate. Its function is as follows. Catalyzes the attachment of alanine to tRNA(Ala) in a two-step reaction: alanine is first activated by ATP to form Ala-AMP and then transferred to the acceptor end of tRNA(Ala). Also edits incorrectly charged Ser-tRNA(Ala) and Gly-tRNA(Ala) via its editing domain. This Mycoplasmopsis synoviae (strain 53) (Mycoplasma synoviae) protein is Alanine--tRNA ligase.